The following is a 399-amino-acid chain: V-set and immunoglobulin domain-containing protein 4 (399 aa).

The signal sequence occupies residues 1–19; sequence MGILLGLLLLGHLTVDTYG. The Extracellular portion of the chain corresponds to 20 to 283; sequence RPILEVPESV…TSAGPGKSLP (264 aa). Ig-like domains are found at residues 21–131 and 143–226; these read PILE…DKIT and PTVT…SDIV. 2 disulfide bridges follow: Cys-41/Cys-113 and Cys-165/Cys-211. The helical transmembrane segment at 284–304 threads the bilayer; it reads VFAIILIISLCCMVVFTMAYI. At 305-399 the chain is on the cytoplasmic side; that stretch reads MLCRKTSQQE…FLATEGKSVC (95 aa).

In terms of tissue distribution, abundantly expressed in several fetal tissues. In adult tissues, highest expression in lung and placenta. Expressed in resting macrophages.

It localises to the membrane. Phagocytic receptor, strong negative regulator of T-cell proliferation and IL2 production. Potent inhibitor of the alternative complement pathway convertases. This is V-set and immunoglobulin domain-containing protein 4 (VSIG4) from Homo sapiens (Human).